The sequence spans 155 residues: Large ribosomal subunit protein uL13 (155 aa).

Belongs to the universal ribosomal protein uL13 family. Part of the 50S ribosomal subunit.

This protein is one of the early assembly proteins of the 50S ribosomal subunit, although it is not seen to bind rRNA by itself. It is important during the early stages of 50S assembly. In Rickettsia conorii (strain ATCC VR-613 / Malish 7), this protein is Large ribosomal subunit protein uL13.